A 5098-amino-acid polypeptide reads, in one-letter code: Malformin synthetase mlfA (5098 aa).

Positions 225-616 (ERHAANRPHS…CGRADTQVKL (392 aa)) are adenylation 1. The Carrier 1 domain maps to 756-829 (SRLEQEIQLA…EAASLAKVQE (74 aa)). Position 790 is an O-(pantetheine 4'-phosphoryl)serine (Ser790). Positions 867 to 1298 (EDVFPCTTMQ…ALDSLTLLQA (432 aa)) are condensation 1. Positions 1326 to 1715 (DGWVTRQPES…GRKDTQVKLR (390 aa)) are adenylation 2. The region spanning 1853–1930 (TAASELERTL…QLAAEFGEPA (78 aa)) is the Carrier 2 domain. Residue Ser1890 is modified to O-(pantetheine 4'-phosphoryl)serine. 2 disordered regions span residues 1930-1960 (AGQS…DGVD) and 1993-2022 (GSSS…RVVS). Low complexity-rich tracts occupy residues 1933 to 1957 (SASS…STND) and 1993 to 2011 (GSSS…SSSS). The condensation 2 stretch occupies residues 2063–2478 (EDIYPATALQ…ALSHSDRQTL (416 aa)). Positions 2501–2893 (VRTPHAPAVC…IGRRDGQLKL (393 aa)) are adenylation 3. Positions 3029 to 3105 (RPVTAQEREM…QLMRHLSATR (77 aa)) constitute a Carrier 3 domain. At Ser3066 the chain carries O-(pantetheine 4'-phosphoryl)serine. Condensation stretches follow at residues 3122–3587 (WVAL…TYDQ) and 3608–4027 (NIYP…EQLM). Residues 4052–4442 (HASREAVCAW…VGRKDNQIKF (391 aa)) form an adenylation 4 region. One can recognise a Carrier 4 domain in the interval 4576 to 4652 (MPSTAAERKM…DLAYRTTNLV (77 aa)). Ser4613 bears the O-(pantetheine 4'-phosphoryl)serine mark. Residues 4689-5016 (DVLPTTSFQR…LQTIVQHQNN (328 aa)) are condensation 5.

It belongs to the NRP synthetase family.

It participates in secondary metabolite biosynthesis. Functionally, nonribosomal peptide synthetase; part of the gene cluster that mediates the biosynthesis of malformins, cyclic pentapeptides with a disulfide bond between 2 consecutive cysteins, that show potential anti-tumor as well as antimalarial and antitrypanosomal properties. The nonribosomal peptide synthetase mlfA is responsible of the formation of the cyclic pentapeptide. The malformin biosynthesis clusters in malformin-producing fungi also contain enzymes involved in the formation of the disulfide bond between the two consecutive cysteins within malformins, in addition to additional tailoring enzymes such as methyltransferases or oxidoreductases. They are also composed of up to 4 major facilitator superfamily transporters, and transcription factors probably involved in the regulation of the expression of those clusters. The chain is Malformin synthetase mlfA from Aspergillus homomorphus (strain CBS 101889).